Here is a 434-residue protein sequence, read N- to C-terminus: Enolase (434 aa).

Position 166 (Gln166) interacts with (2R)-2-phosphoglycerate. Glu208 (proton donor) is an active-site residue. Asp245, Glu290, and Asp317 together coordinate Mg(2+). (2R)-2-phosphoglycerate is bound by residues Lys342, Arg371, Ser372, and Lys393. The Proton acceptor role is filled by Lys342.

This sequence belongs to the enolase family. Requires Mg(2+) as cofactor.

The protein localises to the cytoplasm. It localises to the secreted. The protein resides in the cell surface. The catalysed reaction is (2R)-2-phosphoglycerate = phosphoenolpyruvate + H2O. It functions in the pathway carbohydrate degradation; glycolysis; pyruvate from D-glyceraldehyde 3-phosphate: step 4/5. Its function is as follows. Catalyzes the reversible conversion of 2-phosphoglycerate (2-PG) into phosphoenolpyruvate (PEP). It is essential for the degradation of carbohydrates via glycolysis. This Caldicellulosiruptor saccharolyticus (strain ATCC 43494 / DSM 8903 / Tp8T 6331) protein is Enolase.